The chain runs to 203 residues: Endo-type membrane-bound lytic murein transglycosylase A (203 aa).

The first 15 residues, Met-1–Gly-15, serve as a signal peptide directing secretion. Cys-16 is lipidated: N-palmitoyl cysteine. Residue Cys-16 is the site of S-diacylglycerol cysteine attachment.

Belongs to the transglycosylase Slt family.

It localises to the cell outer membrane. It catalyses the reaction Endolytic cleavage of the (1-&gt;4)-beta-glycosidic linkage between N-acetylmuramic acid (MurNAc) and N-acetylglucosamine (GlcNAc) residues in peptidoglycan with concomitant formation of a 1,6-anhydrobond in the MurNAc residue.. Murein-degrading enzyme. May play a role in recycling of muropeptides during cell elongation and/or cell division. Preferentially cleaves at a distance of more than two disaccharide units from the ends of the glycan chain. The sequence is that of Endo-type membrane-bound lytic murein transglycosylase A from Escherichia coli O1:K1 / APEC.